A 374-amino-acid polypeptide reads, in one-letter code: uncharacterized protein (374 aa).

The signal sequence occupies residues 1 to 21 (MSIISRVCIPCAVLLFAQLHA). Residues 22-102 (KELVHVSQLK…ASASAWTSLS (81 aa)) enclose the Fibronectin type-III domain.

This is an uncharacterized protein from Treponema pallidum (strain Nichols).